The primary structure comprises 129 residues: LEM domain-containing protein 1 (129 aa).

Residues 1 to 45 form the LEM domain; that stretch reads MVDVKCLSDYELHKHLMKLGFTPGPILPSTRKTYEKKLVQLLASP. The segment at 45–129 is disordered; sequence PPWKPPVMKR…RAPRTTSHGA (85 aa). Basic and acidic residues predominate over residues 83-97; that stretch reads SLKKTTLDATRDPRA.

In Mus musculus (Mouse), this protein is LEM domain-containing protein 1 (Lemd1).